The primary structure comprises 321 residues: GTP 3',8-cyclase (321 aa).

Residues 5-233 form the Radical SAM core domain; it reads SFNRVIDYIR…QGSSKIYTLE (229 aa). GTP is bound at residue arginine 14. [4Fe-4S] cluster-binding residues include cysteine 21 and cysteine 25. Tyrosine 27 is a binding site for S-adenosyl-L-methionine. Cysteine 28 provides a ligand contact to [4Fe-4S] cluster. Residue arginine 64 coordinates GTP. Glycine 68 is a binding site for S-adenosyl-L-methionine. GTP is bound at residue serine 95. Serine 119 is an S-adenosyl-L-methionine binding site. Lysine 155 is a GTP binding site. An S-adenosyl-L-methionine-binding site is contributed by methionine 189. 2 residues coordinate [4Fe-4S] cluster: cysteine 249 and cysteine 252. Residue 254–256 participates in GTP binding; the sequence is RIR. [4Fe-4S] cluster is bound at residue cysteine 266.

This sequence belongs to the radical SAM superfamily. MoaA family. In terms of assembly, monomer and homodimer. [4Fe-4S] cluster is required as a cofactor.

It carries out the reaction GTP + AH2 + S-adenosyl-L-methionine = (8S)-3',8-cyclo-7,8-dihydroguanosine 5'-triphosphate + 5'-deoxyadenosine + L-methionine + A + H(+). Its pathway is cofactor biosynthesis; molybdopterin biosynthesis. In terms of biological role, catalyzes the cyclization of GTP to (8S)-3',8-cyclo-7,8-dihydroguanosine 5'-triphosphate. This is GTP 3',8-cyclase from Helicobacter pylori (strain HPAG1).